The chain runs to 404 residues: Exodeoxyribonuclease 7 large subunit (404 aa).

This sequence belongs to the XseA family. In terms of assembly, heterooligomer composed of large and small subunits.

The protein localises to the cytoplasm. The catalysed reaction is Exonucleolytic cleavage in either 5'- to 3'- or 3'- to 5'-direction to yield nucleoside 5'-phosphates.. In terms of biological role, bidirectionally degrades single-stranded DNA into large acid-insoluble oligonucleotides, which are then degraded further into small acid-soluble oligonucleotides. This Fusobacterium nucleatum subsp. nucleatum (strain ATCC 25586 / DSM 15643 / BCRC 10681 / CIP 101130 / JCM 8532 / KCTC 2640 / LMG 13131 / VPI 4355) protein is Exodeoxyribonuclease 7 large subunit.